The following is a 361-amino-acid chain: MSGNGGAATTAEENGSKMRVIRVGTRKSQLARIQTDTVVAMLKALYPGIQFEIIAMSTTGDKILDTALSKIGEKSLFTKELENALEKNEVDLVVHSLKDVPTILPPGFTIGAICKRENPCDAVVFHPKFIGKTLETLPEKSAVGTSSLRRVAQLQRKFPHLEFKSIRGNLNTRLRKLDELQEFSAIVLAVAGLQRMGWQNRVGQILHPEECMYAVGQGALAVEVRAKDQDILDLVSVLHDPETLLRCIAERAFLRHLEGGCSVPVAVHTVMKDGQLYLTGGVWSLDGSDSMQETMQATIQVPVQQEDGPEDDPQLVGITARNIPRGAQLAAENLGISLASLLLNKGAKNILDVARQLNDVR.

At Ser-2 the chain carries N-acetylserine. Ser-69 is subject to Phosphoserine. N6-acetyllysine is present on Lys-74. Ser-147 carries the post-translational modification Phosphoserine. At Cys-261 the chain carries S-(dipyrrolylmethanemethyl)cysteine.

The protein belongs to the HMBS family. As to quaternary structure, monomer. Requires dipyrromethane as cofactor.

The protein localises to the cytoplasm. It localises to the cytosol. The catalysed reaction is 4 porphobilinogen + H2O = hydroxymethylbilane + 4 NH4(+). Its pathway is porphyrin-containing compound metabolism; protoporphyrin-IX biosynthesis; coproporphyrinogen-III from 5-aminolevulinate: step 2/4. Functionally, as part of the heme biosynthetic pathway, catalyzes the sequential polymerization of four molecules of porphobilinogen to form hydroxymethylbilane, also known as preuroporphyrinogen. Catalysis begins with the assembly of the dipyrromethane cofactor by the apoenzyme from two molecules of porphobilinogen or from preuroporphyrinogen. The covalently linked cofactor acts as a primer, around which the tetrapyrrole product is assembled. In the last step of catalysis, the product, preuroporphyrinogen, is released, leaving the cofactor bound to the holodeaminase intact. This Mus musculus (Mouse) protein is Porphobilinogen deaminase (Hmbs).